A 192-amino-acid chain; its full sequence is Ion-translocating oxidoreductase complex subunit A (192 aa).

6 consecutive transmembrane segments (helical) span residues 5–25, 39–59, 63–83, 102–122, 134–154, and 171–191; these read ILLIISTALINNFVLVKFLGL, IGMSLATMFVLTVASISAYLI, ILTPLSATFLRTLVFILVIAV, LLGIFLPLITTNCAVLGVALL, VIYGFGASLGFGLVLVLFAAL, and SIALITAGLMSLAFMGFTGLV.

Belongs to the NqrDE/RnfAE family. In terms of assembly, the complex is composed of six subunits: RnfA, RnfB, RnfC, RnfD, RnfE and RnfG.

It is found in the cell inner membrane. Functionally, part of a membrane-bound complex that couples electron transfer with translocation of ions across the membrane. The polypeptide is Ion-translocating oxidoreductase complex subunit A (Pasteurella multocida (strain Pm70)).